We begin with the raw amino-acid sequence, 396 residues long: Cytochrome P450 121 (396 aa).

Cys345 provides a ligand contact to heme.

The protein belongs to the cytochrome P450 family. Heme serves as cofactor.

The protein localises to the cytoplasm. This Mycobacterium bovis (strain ATCC BAA-935 / AF2122/97) protein is Cytochrome P450 121 (cyp121).